The following is a 174-amino-acid chain: MATEATGAVEAAPGMPQLDFSTFPNQIFWLIITLVAIYLILTKVALPRIGSVLAERSGTITNDLAAAEELKLAAVEAEKAYNQALADARAEAQKIVAEARAEIQADLDVATAKADAEIAAKSAEAEKAIAEIREGAMASVTEVATDTAQALVAALLPSAKDADVSAAVAERVKG.

The helical transmembrane segment at 27 to 47 threads the bilayer; that stretch reads IFWLIITLVAIYLILTKVALP.

This sequence belongs to the ATPase B chain family. As to quaternary structure, F-type ATPases have 2 components, F(1) - the catalytic core - and F(0) - the membrane proton channel. F(1) has five subunits: alpha(3), beta(3), gamma(1), delta(1), epsilon(1). F(0) has three main subunits: a(1), b(2) and c(10-14). The alpha and beta chains form an alternating ring which encloses part of the gamma chain. F(1) is attached to F(0) by a central stalk formed by the gamma and epsilon chains, while a peripheral stalk is formed by the delta and b chains.

It localises to the cell inner membrane. Its function is as follows. F(1)F(0) ATP synthase produces ATP from ADP in the presence of a proton or sodium gradient. F-type ATPases consist of two structural domains, F(1) containing the extramembraneous catalytic core and F(0) containing the membrane proton channel, linked together by a central stalk and a peripheral stalk. During catalysis, ATP synthesis in the catalytic domain of F(1) is coupled via a rotary mechanism of the central stalk subunits to proton translocation. Functionally, component of the F(0) channel, it forms part of the peripheral stalk, linking F(1) to F(0). The b'-subunit is a diverged and duplicated form of b found in plants and photosynthetic bacteria. The sequence is that of ATP synthase subunit b 2 (atpF2) from Dinoroseobacter shibae (strain DSM 16493 / NCIMB 14021 / DFL 12).